Here is a 557-residue protein sequence, read N- to C-terminus: MSDPEMGWVPEPPTMTLGASRVELRVSCHGLLDRDTLTKPHPCVLLKLYSDEQWVEVERTEVLRSCSSPVFSRVLALEYFFEEKQPLQFHVFDAEDGATSPRNDTFLGSTECTLGQIVSQTKVTKPLLLKNGKTAGKSTITIVAEEVSGTNDYVQLTFRAYKLDNKDPFSKSDPFMEIYKTNEDQSDQLVWRTEVVKNNLNPSWEPFRLSLHSLCSCDVHRPLKFLVYDYDSSGKHDFIGEFTSTFQEMQEGTANPGQEMQWDCINPKYRDKKKNYKSSGTVVLAQCTVEKVHTFLDYIMGGCQISFTVAIDFTASNGDPRSSQSLHCLSPRQPNHYLQALRAVGGICQDYDSDKRFPAFGFGARIPPNFEVSHDFAINFDPENPECEEISGVIASYRRCLPQIQLYGPTNVAPIINRVAEPAQREQSTGQATKYSVLLVLTDGVVSDMAETRTAIVRASRLPMSIIIVGVGNADFSDMRLLDGDDGPLRCPRGVPAARDIVQFVPFRDFKDAAPSALAKRVLAEVPRQVVEYYASQGISPGAPRPCTLATTPSPSP.

C2 domains are found at residues 2–127 and 134–263; these read SDPE…TKPL and TAGK…MQWD. Ca(2+)-binding residues include D167, D173, D229, D231, and D237. The interval 244–303 is linker region; sequence STFQEMQEGTANPGQEMQWDCINPKYRDKKKNYKSSGTVVLAQCTVEKVHTFLDYIMGGC. The 221-residue stretch at 306–526 folds into the VWFA domain; it reads SFTVAIDFTA…ALAKRVLAEV (221 aa).

This sequence belongs to the copine family. Interacts (via second C2 domain) with OS9 (via C-terminus); this interaction occurs in a calcium-dependent manner in vitro. May interact with NECAB1. The cofactor is Ca(2+).

The protein localises to the cytoplasm. It localises to the cell membrane. The protein resides in the endosome. Its subcellular location is the cytoplasmic vesicle. It is found in the clathrin-coated vesicle. The protein localises to the perikaryon. It localises to the cell projection. The protein resides in the dendrite. In terms of biological role, calcium-dependent phospholipid-binding protein that plays a role in calcium-mediated intracellular processes. Binds phospholipid membranes in a calcium-dependent manner. Plays a role in dendrite formation by melanocytes. The polypeptide is Copine-6 (Pongo abelii (Sumatran orangutan)).